The sequence spans 62 residues: Photosystem II reaction center protein Z (62 aa).

2 helical membrane-spanning segments follow: residues 8–28 and 41–61; these read TMFA…ITFA and FSGV…NSFI.

Belongs to the PsbZ family. PSII is composed of 1 copy each of membrane proteins PsbA, PsbB, PsbC, PsbD, PsbE, PsbF, PsbH, PsbI, PsbJ, PsbK, PsbL, PsbM, PsbT, PsbY, PsbZ, Psb30/Ycf12, at least 3 peripheral proteins of the oxygen-evolving complex and a large number of cofactors. It forms dimeric complexes.

The protein localises to the plastid. It is found in the chloroplast thylakoid membrane. May control the interaction of photosystem II (PSII) cores with the light-harvesting antenna, regulates electron flow through the 2 photosystem reaction centers. PSII is a light-driven water plastoquinone oxidoreductase, using light energy to abstract electrons from H(2)O, generating a proton gradient subsequently used for ATP formation. The polypeptide is Photosystem II reaction center protein Z (Welwitschia mirabilis (Tree tumbo)).